We begin with the raw amino-acid sequence, 260 residues long: Pyridoxine 5'-phosphate synthase (260 aa).

Residues Asn10 and Arg21 each coordinate 3-amino-2-oxopropyl phosphate. The active-site Proton acceptor is His46. Residues Arg48 and His53 each contribute to the 1-deoxy-D-xylulose 5-phosphate site. Catalysis depends on Glu76, which acts as the Proton acceptor. Residue Thr113 participates in 1-deoxy-D-xylulose 5-phosphate binding. The active-site Proton donor is the His204. 3-amino-2-oxopropyl phosphate contacts are provided by residues Asp205 and 227–228 (GH).

This sequence belongs to the PNP synthase family. In terms of assembly, homooctamer; tetramer of dimers.

It localises to the cytoplasm. The catalysed reaction is 3-amino-2-oxopropyl phosphate + 1-deoxy-D-xylulose 5-phosphate = pyridoxine 5'-phosphate + phosphate + 2 H2O + H(+). The protein operates within cofactor biosynthesis; pyridoxine 5'-phosphate biosynthesis; pyridoxine 5'-phosphate from D-erythrose 4-phosphate: step 5/5. Its function is as follows. Catalyzes the complicated ring closure reaction between the two acyclic compounds 1-deoxy-D-xylulose-5-phosphate (DXP) and 3-amino-2-oxopropyl phosphate (1-amino-acetone-3-phosphate or AAP) to form pyridoxine 5'-phosphate (PNP) and inorganic phosphate. In Xylella fastidiosa (strain M12), this protein is Pyridoxine 5'-phosphate synthase.